We begin with the raw amino-acid sequence, 336 residues long: Nuclear envelope-associated protein 1 (336 aa).

Residues 125 to 261 (CSMLKQQLDD…RRTDQDLKKK (137 aa)) are a coiled coil. Positions 240 to 261 (KTKELESQLEKQRRTDQDLKKK) match the Bipartite nuclear localization signal motif. A helical membrane pass occupies residues 313–330 (FWDNSGFKIVVSMSMLML).

Forms heteromers with NEAP2 and NEAP3. Interacts with SUN1; SUN2 and bZIP18.

It is found in the nucleus inner membrane. Its subcellular location is the nucleus. It localises to the nucleoplasm. This chain is Nuclear envelope-associated protein 1, found in Arabidopsis thaliana (Mouse-ear cress).